A 150-amino-acid chain; its full sequence is Arginine repressor (150 aa).

Belongs to the ArgR family.

It is found in the cytoplasm. It participates in amino-acid biosynthesis; L-arginine biosynthesis [regulation]. Its function is as follows. Regulates arginine biosynthesis genes. The protein is Arginine repressor of Psychromonas ingrahamii (strain DSM 17664 / CCUG 51855 / 37).